The sequence spans 731 residues: MAETPNSDMSGATGGRSKRPKSNQDWWPSKLNLEILDQNARDVGPVEDDFDYAEEFQKLDLEAVKSDLEELMTSSQDWWPADYGHYGPLFIRMAWHSAGTYRTADGRGGAAGGRQRFAPINSWPDNANLDKARRLLLPIKQKYGQKISWADLMILAGNVAIESMGFKTFGYAGGREDAFEEDKAVNWGPEDEFETQERFDEPGEIQEGLGASVMGLIYVNPEGPDGNPDPEASAKNIRQTFDRMAMNDKETAALIAGGHTFGKVHGADDPEENLGPEPEAAPIEQQGLGWQNKNGNSKGGEMITSGIEGPWTQSPTEWDMGYINNLLDYEWEPEKGPGGAWQWAPKSEELKNSVPDAHDPDEKQTPMMLTTDIALKRDPDYREVMETFQENPMEFGMNFAKAWYKLTHRDMGPPERFLGPEVPDEEMIWQDPLPDADYDLIGDEEIAELKEEILDSDLSVSQLVKTAWASASTYRDSDKRGGANGARLRLEPQKNWEVNEPEQLETVLGTLENIQTEFNDSRSDGTQVSLADLIVLGGNAAVEQAAANAGYDVEIPFEPGRVDAGPEHTDAPSFDALKPKVDGVRNYIQDDITRPAEEVLVDNADLLNLTASELTALIGGMRSIGANYQDTDLGVFTDEPETLTNDFFVNLLDMGTEWEPAADSEHRYKGLDRDTGEVKWEATRIDLIFGSNDRLRAISEVYGSADAEKKLVHDFVDTWSKVMKLDRFDLE.

The span at 1–10 shows a compositional bias: polar residues; the sequence is MAETPNSDMS. Positions 1–26 are disordered; sequence MAETPNSDMSGATGGRSKRPKSNQDW. The tryptophyl-tyrosyl-methioninium (Trp-Tyr) (with M-244) cross-link spans 95-218; it reads WHSAGTYRTA…LGASVMGLIY (124 aa). Residue His96 is the Proton acceptor of the active site. The segment at residues 218 to 244 is a cross-link (tryptophyl-tyrosyl-methioninium (Tyr-Met) (with W-95)); sequence YVNPEGPDGNPDPEASAKNIRQTFDRM. His259 contacts heme b.

Homodimer. Requires heme b as cofactor. Post-translationally, formation of the three residue Trp-Tyr-Met cross-link is important for the catalase, but not the peroxidase activity of the enzyme.

The enzyme catalyses H2O2 + AH2 = A + 2 H2O. The catalysed reaction is 2 H2O2 = O2 + 2 H2O. In terms of biological role, bifunctional enzyme with both catalase and broad-spectrum peroxidase activity. This Haloarcula marismortui (strain ATCC 43049 / DSM 3752 / JCM 8966 / VKM B-1809) (Halobacterium marismortui) protein is Catalase-peroxidase 2.